Here is a 372-residue protein sequence, read N- to C-terminus: NADH-quinone oxidoreductase subunit H (372 aa).

A run of 8 helical transmembrane segments spans residues 34 to 54 (LPLGLLVIAAIPLVFIALYAL), 106 to 126 (FLFVIGPGVLFVGSFLAFAVL), 139 to 159 (VGLFYAIGIVALEVVGILAAG), 178 to 198 (IVSYEIPAAIALLCGAMMAGT), 217 to 237 (FFLFQSPIAWLPFLIYFIASL), 269 to 289 (VIFLAEYGSMFMVSAIIAIVF), 313 to 333 (VWGAFWIIMKGFFFIFVQMWL), and 352 to 372 (VLTPFAFVSFVLTAIWMIYVP).

It belongs to the complex I subunit 1 family. In terms of assembly, NDH-1 is composed of 14 different subunits. Subunits NuoA, H, J, K, L, M, N constitute the membrane sector of the complex.

It localises to the cell inner membrane. The catalysed reaction is a quinone + NADH + 5 H(+)(in) = a quinol + NAD(+) + 4 H(+)(out). In terms of biological role, NDH-1 shuttles electrons from NADH, via FMN and iron-sulfur (Fe-S) centers, to quinones in the respiratory chain. The immediate electron acceptor for the enzyme in this species is believed to be ubiquinone. Couples the redox reaction to proton translocation (for every two electrons transferred, four hydrogen ions are translocated across the cytoplasmic membrane), and thus conserves the redox energy in a proton gradient. This subunit may bind ubiquinone. The sequence is that of NADH-quinone oxidoreductase subunit H from Chlorobium luteolum (strain DSM 273 / BCRC 81028 / 2530) (Pelodictyon luteolum).